Here is a 947-residue protein sequence, read N- to C-terminus: Testis-expressed protein 11 (947 aa).

This sequence belongs to the SPO22 family. In terms of assembly, interacts with SYCP2. Interacts with PBXIP1; may prevent interaction between PBXIP1 and ESR2. Interacts with SHOC1. Interacts with REDIC1. In terms of tissue distribution, testis-specific.

Its subcellular location is the chromosome. Its function is as follows. Regulator of crossing-over during meiosis. Involved in initiation and/or maintenance of chromosome synapsis and formation of crossovers. The polypeptide is Testis-expressed protein 11 (Tex11) (Mus musculus (Mouse)).